A 206-amino-acid chain; its full sequence is Platelet glycoprotein Ib beta chain (206 aa).

Residues 1–26 form the signal peptide; that stretch reads MGSRPRGALSLLLLLLALLSRPASGC. Disulfide bonds link cysteine 26-cysteine 32 and cysteine 30-cysteine 39. Residues 27-55 enclose the LRRNT domain; it reads PAPCSCAGTLVDCGRRGLTWASLPAAFPP. The Extracellular portion of the chain corresponds to 27–147; the sequence is PAPCSCAGTL…RAACAPGLLC (121 aa). The LRR repeat unit spans residues 60–83; the sequence is LVLTGNNLTALPPGLLDALPALRA. An N-linked (GlcNAc...) asparagine glycan is attached at asparagine 66. The region spanning 89–143 is the LRRCT domain; sequence NPWRCDCRLLPLRAWLAGRPERAPYRDLRCVAPPALRGRLLPYVAEDELRAACAP. 2 disulfide bridges follow: cysteine 93–cysteine 118 and cysteine 95–cysteine 141. The chain crosses the membrane as a helical span at residues 148-172; sequence WGALVAQLALLVLGLLHALLLALLL. The Cytoplasmic portion of the chain corresponds to 173–206; it reads GRLRRLRARARARSIQEFSLTAPLVAESARGGAS. Serine 186 and serine 191 each carry phosphoserine. Residue threonine 193 is modified to Phosphothreonine. Serine 200 bears the Phosphoserine mark.

In terms of assembly, two GP-Ib beta are disulfide-linked to one GP-Ib alpha. GP-IX is complexed with the GP-Ib heterodimer via a non covalent linkage. Interacts with TRAF4.

It localises to the membrane. Gp-Ib, a surface membrane protein of platelets, participates in the formation of platelet plugs by binding to von Willebrand factor, which is already bound to the subendothelium. In Mus musculus (Mouse), this protein is Platelet glycoprotein Ib beta chain (Gp1bb).